The primary structure comprises 412 residues: Light-independent protochlorophyllide reductase subunit N (412 aa).

Residues Cys16, Cys41, and Cys102 each coordinate [4Fe-4S] cluster.

The protein belongs to the BchN/ChlN family. Protochlorophyllide reductase is composed of three subunits; ChlL, ChlN and ChlB. Forms a heterotetramer of two ChlB and two ChlN subunits. It depends on [4Fe-4S] cluster as a cofactor.

It catalyses the reaction chlorophyllide a + oxidized 2[4Fe-4S]-[ferredoxin] + 2 ADP + 2 phosphate = protochlorophyllide a + reduced 2[4Fe-4S]-[ferredoxin] + 2 ATP + 2 H2O. It participates in porphyrin-containing compound metabolism; chlorophyll biosynthesis (light-independent). Its function is as follows. Component of the dark-operative protochlorophyllide reductase (DPOR) that uses Mg-ATP and reduced ferredoxin to reduce ring D of protochlorophyllide (Pchlide) to form chlorophyllide a (Chlide). This reaction is light-independent. The NB-protein (ChlN-ChlB) is the catalytic component of the complex. This is Light-independent protochlorophyllide reductase subunit N from Synechococcus sp. (strain RCC307).